The chain runs to 415 residues: Phosphoglycerate kinase (415 aa).

Residues valine 23, aspartate 24, phenylalanine 25, asparagine 26, glutamine 39, arginine 40, serine 63, histidine 64, glycine 66, arginine 67, leucine 122, arginine 123, and arginine 170 each contribute to the (2R)-3-phosphoglycerate site. Glycine 213 serves as a coordination point for ADP. CDP is bound at residue glycine 213. AMP-binding residues include alanine 214 and lysine 215. Alanine 214 provides a ligand contact to ATP. A Mg(2+)-binding site is contributed by alanine 214. Aspartate 218 provides a ligand contact to CDP. Aspartate 218 is a binding site for Mg(2+). Lysine 219 lines the AMP pocket. Position 219 (lysine 219) interacts with ATP. Glycine 237 contacts ADP. Glycine 237 contacts CDP. Residues glycine 238 and glycine 311 each coordinate AMP. The ATP site is built by glycine 238 and glycine 311. Residues glycine 336 and phenylalanine 341 each contribute to the CDP site. Phenylalanine 341 serves as a coordination point for ADP. An AMP-binding site is contributed by glutamate 342. The ATP site is built by glutamate 342, aspartate 373, and threonine 374. Aspartate 373 serves as a coordination point for Mg(2+).

The protein belongs to the phosphoglycerate kinase family. In terms of assembly, monomer. Mg(2+) is required as a cofactor.

The protein resides in the cytoplasm. The protein localises to the mitochondrion. The enzyme catalyses (2R)-3-phosphoglycerate + ATP = (2R)-3-phospho-glyceroyl phosphate + ADP. The protein operates within carbohydrate degradation; glycolysis; pyruvate from D-glyceraldehyde 3-phosphate: step 2/5. Its function is as follows. Catalyzes one of the two ATP producing reactions in the glycolytic pathway via the reversible conversion of 1,3-diphosphoglycerate to 3-phosphoglycerate. Both L- and D- forms of purine and pyrimidine nucleotides can be used as substrates, but the activity is much lower on pyrimidines. Negatively regulates the biosynthesis of acetyl-CoA from pyruvate in the mitochondrion. This chain is Phosphoglycerate kinase (PGKA), found in Penicillium chrysogenum (Penicillium notatum).